The primary structure comprises 118 residues: Large ribosomal subunit protein bL20 (118 aa).

This sequence belongs to the bacterial ribosomal protein bL20 family.

Its function is as follows. Binds directly to 23S ribosomal RNA and is necessary for the in vitro assembly process of the 50S ribosomal subunit. It is not involved in the protein synthesizing functions of that subunit. This chain is Large ribosomal subunit protein bL20, found in Staphylococcus carnosus (strain TM300).